A 168-amino-acid chain; its full sequence is Glycine-rich RNA-binding protein 2 (168 aa).

The RRM domain maps to 8-86; the sequence is YRCFVGGLAW…RNITVNQAQS (79 aa). Residues 148-168 are disordered; the sequence is GYGGGGGYGGNRGDSGGNWRN.

Its function is as follows. Possibly has a role in RNA transcription or processing during stress. The sequence is that of Glycine-rich RNA-binding protein 2 (GRP2) from Sorghum bicolor (Sorghum).